Consider the following 245-residue polypeptide: Probable transcriptional regulatory protein NSE_0641 (245 aa).

Residues 1–22 (MAGHSQYANIKHRKNAQDAKRA) are disordered.

It belongs to the TACO1 family.

The protein resides in the cytoplasm. The chain is Probable transcriptional regulatory protein NSE_0641 from Neorickettsia sennetsu (strain ATCC VR-367 / Miyayama) (Ehrlichia sennetsu).